A 216-amino-acid chain; its full sequence is Pyrophosphatase PpaX (216 aa).

The active-site Nucleophile is Asp-9.

This sequence belongs to the HAD-like hydrolase superfamily. PpaX family. The cofactor is Mg(2+).

It carries out the reaction diphosphate + H2O = 2 phosphate + H(+). Its function is as follows. Hydrolyzes pyrophosphate formed during P-Ser-HPr dephosphorylation by HPrK/P. Might play a role in controlling the intracellular pyrophosphate pool. The protein is Pyrophosphatase PpaX of Bacillus cereus (strain B4264).